Reading from the N-terminus, the 212-residue chain is Thymidylate kinase (212 aa).

Position 11 to 18 (11 to 18 (GPEGAGKT)) interacts with ATP.

The protein belongs to the thymidylate kinase family.

The enzyme catalyses dTMP + ATP = dTDP + ADP. Its function is as follows. Phosphorylation of dTMP to form dTDP in both de novo and salvage pathways of dTTP synthesis. The protein is Thymidylate kinase of Streptococcus pneumoniae (strain CGSP14).